The chain runs to 240 residues: MSFEKLQKELHEAIEGVNRYNPENVADLAACVQAMVNENKYDKDIVLTILKLYQLNPEKYDEAVVRQVLLKTLMVLPSSDFALAKCLIDTNRLGSQELRRIFDLGAVLESCNFAVFWKLVKGAYKPTTNPNEPFKVPGEVPKMIKPMVGFEDAVKHYACRVISVTFQKIEKKMLSRLLGGASDKEVTALAQSFGWEAKENGDVFFVANHEGTIKTRNIDEKIQFPHVADLLTSIQPPLTL.

In terms of domain architecture, PCI spans 41–221 (YDKDIVLTIL…TIKTRNIDEK (181 aa)).

This sequence belongs to the eIF-3 subunit K family. In terms of assembly, component of the eukaryotic translation initiation factor 3 (eIF-3) complex.

It localises to the cytoplasm. Functionally, component of the eukaryotic translation initiation factor 3 (eIF-3) complex, which is involved in protein synthesis of a specialized repertoire of mRNAs and, together with other initiation factors, stimulates binding of mRNA and methionyl-tRNAi to the 40S ribosome. The eIF-3 complex specifically targets and initiates translation of a subset of mRNAs involved in cell proliferation. The protein is Eukaryotic translation initiation factor 3 subunit K of Caenorhabditis elegans.